A 125-amino-acid polypeptide reads, in one-letter code: Protein ApaG (125 aa).

The ApaG domain maps to 1–125 (MINSPRVCIQ…FRLAVPTLIH (125 aa)).

This Salmonella arizonae (strain ATCC BAA-731 / CDC346-86 / RSK2980) protein is Protein ApaG.